A 272-amino-acid polypeptide reads, in one-letter code: MTRQWETLREYDEIKYEFYEGIAKVTINRPEVRNAFTPKTVAEMIDAFSRARDDQNISVIILTGEGDKAFCSGGDQKKRGHGGYVGEDQIPRLNVLDLQRLIRVIPKPVIAMVRGYAIGGGNVLNVVCDLTIAADNAIFGQTGPKVGSFDAGYGSGYLARIVGHKKAREIWYLCRQYNAQEALDMGLVNTVVPLDQIEDETVQWCKEIMKHSPTALRFLKAAMNADTDGLAGLQQMAGDATLLYYTTDEAKEGRDAFKEKRDPDFDQFPKFP.

Substrate-binding positions include arginine 33, 72–76 (SGGDQ), tyrosine 84, 116–120 (YAIGG), threonine 142, serine 148, tyrosine 245, and lysine 260. A hydrogencarbonate-binding site is contributed by 141-143 (QTG). Residues 253 to 264 (GRDAFKEKRDPD) show a composition bias toward basic and acidic residues. Residues 253–272 (GRDAFKEKRDPDFDQFPKFP) are disordered.

It belongs to the enoyl-CoA hydratase/isomerase family. MenB subfamily. It depends on hydrogencarbonate as a cofactor.

It carries out the reaction 2-succinylbenzoyl-CoA + H(+) = 1,4-dihydroxy-2-naphthoyl-CoA + H2O. The protein operates within quinol/quinone metabolism; 1,4-dihydroxy-2-naphthoate biosynthesis; 1,4-dihydroxy-2-naphthoate from chorismate: step 6/7. Its pathway is quinol/quinone metabolism; menaquinone biosynthesis. Its function is as follows. Converts o-succinylbenzoyl-CoA (OSB-CoA) to 1,4-dihydroxy-2-naphthoyl-CoA (DHNA-CoA). The protein is 1,4-dihydroxy-2-naphthoyl-CoA synthase of Staphylococcus haemolyticus (strain JCSC1435).